The following is a 354-amino-acid chain: Chaperone protein dnaJ 49 (354 aa).

One can recognise a J domain in the interval 99 to 163; sequence DYYAILGLEK…NSRRQFDQVG (65 aa). Residues 237–257 traverse the membrane as a helical segment; sequence CLTIIQILPFFLLLLLAYLPF.

The protein belongs to the DnaJ family. C/III subfamily.

It is found in the membrane. Functionally, plays a continuous role in plant development probably in the structural organization of compartments. This is Chaperone protein dnaJ 49 (ATJ49) from Arabidopsis thaliana (Mouse-ear cress).